Consider the following 346-residue polypeptide: Large ribosomal subunit protein uL10 (346 aa).

The interval 307 to 346 is disordered; the sequence is AAAVAKEPEKKEEVKEEEEEEEEEDHSEEDGMAGLGSLFG. The span at 321-337 shows a compositional bias: acidic residues; the sequence is KEEEEEEEEEDHSEEDG.

The protein belongs to the universal ribosomal protein uL10 family. As to quaternary structure, part of the 50S ribosomal subunit. Forms part of the ribosomal stalk which helps the ribosome interact with GTP-bound translation factors. Forms both a pentameric L10(L12)2(L12)2 and heptameric L10(L12)2(L12)2(L12)2 complex, where L10 forms an elongated spine to which the L12 dimers bind in a sequential fashion. The proportion of heptameric complexes increases during cell growth.

In terms of biological role, forms part of the ribosomal stalk, playing a central role in the interaction of the ribosome with GTP-bound translation factors. In Methanosarcina barkeri (strain Fusaro / DSM 804), this protein is Large ribosomal subunit protein uL10.